Reading from the N-terminus, the 410-residue chain is Ribulose bisphosphate carboxylase large chain (410 aa).

Positions 100 and 150 each coordinate substrate. Residue Lys152 is the Proton acceptor of the active site. Substrate is bound at residue Lys154. Residues Lys178, Asp180, and Glu181 each contribute to the Mg(2+) site. Lys178 bears the N6-carboxylysine mark. His271 serves as the catalytic Proton acceptor. The substrate site is built by Arg272, His304, and Ser356.

The protein belongs to the RuBisCO large chain family. Type I subfamily. Heterohexadecamer of 8 large chains and 8 small chains; disulfide-linked. The disulfide link is formed within the large subunit homodimers. Mg(2+) is required as a cofactor. Post-translationally, the disulfide bond which can form in the large chain dimeric partners within the hexadecamer appears to be associated with oxidative stress and protein turnover.

It is found in the plastid. It localises to the chloroplast. It catalyses the reaction 2 (2R)-3-phosphoglycerate + 2 H(+) = D-ribulose 1,5-bisphosphate + CO2 + H2O. The catalysed reaction is D-ribulose 1,5-bisphosphate + O2 = 2-phosphoglycolate + (2R)-3-phosphoglycerate + 2 H(+). In terms of biological role, ruBisCO catalyzes two reactions: the carboxylation of D-ribulose 1,5-bisphosphate, the primary event in carbon dioxide fixation, as well as the oxidative fragmentation of the pentose substrate in the photorespiration process. Both reactions occur simultaneously and in competition at the same active site. The polypeptide is Ribulose bisphosphate carboxylase large chain (rbcL) (Gleichenia japonica (Urajiro)).